A 632-amino-acid chain; its full sequence is Actin-related protein 8 (632 aa).

Residues M1–G30 are compositionally biased toward basic and acidic residues. The segment at M1–P43 is disordered. Position 288–291 (D288–D291) interacts with ATP. 2 disordered regions span residues M410–Y429 and Q434–E494. Over residues Q434–A443 the composition is skewed to low complexity.

It belongs to the actin family. ARP8 subfamily. Component of the chromatin remodeling INO80 complex; specifically part of a complex module associated with the DBINO domain of INO80. Exists as monomers and dimers, but the dimer is most probably the biologically relevant form required for stable interactions with histones that exploits the twofold symmetry of the nucleosome core.

Its subcellular location is the nucleus. It is found in the chromosome. Plays an important role in the functional organization of mitotic chromosomes. Exhibits low basal ATPase activity, and unable to polymerize. Functionally, proposed core component of the chromatin remodeling INO80 complex which is involved in transcriptional regulation, DNA replication and probably DNA repair. Required for the recruitment of INO80 (and probably the INO80 complex) to sites of DNA damage Strongly prefer nucleosomes and H3-H4 tetramers over H2A-H2B dimers, suggesting it may act as a nucleosome recognition module within the complex. In Salmo salar (Atlantic salmon), this protein is Actin-related protein 8 (actr8).